The following is a 308-amino-acid chain: uncharacterized protein (308 aa).

Positions 158-221 are disordered; sequence GDSNAETFEE…DSINHGESSE (64 aa). Basic and acidic residues predominate over residues 206–221; that stretch reads RNGDRSDSINHGESSE.

This is an uncharacterized protein from Arabidopsis thaliana (Mouse-ear cress).